We begin with the raw amino-acid sequence, 433 residues long: Protein arginine N-methyltransferase 2 (433 aa).

Positions 1–27 (MSTSGCSSEKSDFQDSTEGEEEEDTQS) are disordered. Residues 15-26 (DSTEGEEEEDTQ) are compositionally biased toward acidic residues. Positions 30–89 (LCMREYVVIRDYMAADATQLSLCFGDKVLLLSAVTQDWWWVKHNGICGYVPASYLHDALN) constitute an SH3 domain. Positions 102 to 416 (DEEYYGSYKT…MSVTLSWVIN (315 aa)) constitute an SAM-dependent MTase PRMT-type domain. The S-adenosyl-L-methionine site is built by H115, R124, G148, E171, and E200. Catalysis depends on residues E214 and E223.

This sequence belongs to the class I-like SAM-binding methyltransferase superfamily. Protein arginine N-methyltransferase family. In terms of assembly, interacts with ctnnb1.

It localises to the cytoplasm. It is found in the nucleus. The enzyme catalyses L-arginyl-[protein] + 2 S-adenosyl-L-methionine = N(omega),N(omega)-dimethyl-L-arginyl-[protein] + 2 S-adenosyl-L-homocysteine + 2 H(+). In terms of biological role, arginine methyltransferase that methylates the guanidino nitrogens of arginyl residues in proteins such as histones. Involved in growth regulation. Involved in embryonic dorsal development. The sequence is that of Protein arginine N-methyltransferase 2 (prmt2) from Xenopus tropicalis (Western clawed frog).